The primary structure comprises 42 residues: Photosystem I reaction center subunit IX (42 aa).

The chain crosses the membrane as a helical span at residues 8-28 (YLSTAPVLLTIWLSFTAALVI).

It belongs to the PsaJ family.

The protein localises to the plastid. It is found in the chloroplast thylakoid membrane. Its function is as follows. May help in the organization of the PsaE and PsaF subunits. This is Photosystem I reaction center subunit IX from Guillardia theta (Cryptophyte).